The primary structure comprises 1275 residues: uncharacterized protein (1275 aa).

This is an uncharacterized protein from Homo sapiens (Human).